We begin with the raw amino-acid sequence, 861 residues long: Leucine--tRNA ligase (861 aa).

A 'HIGH' region motif is present at residues 42-52 (PYPSGKLHMGH). The 'KMSKS' region motif lies at 618 to 622 (KMSKS). Position 621 (Lys-621) interacts with ATP.

Belongs to the class-I aminoacyl-tRNA synthetase family.

It localises to the cytoplasm. The enzyme catalyses tRNA(Leu) + L-leucine + ATP = L-leucyl-tRNA(Leu) + AMP + diphosphate. In Buchnera aphidicola subsp. Baizongia pistaciae (strain Bp), this protein is Leucine--tRNA ligase.